The following is a 629-amino-acid chain: tRNA uridine 5-carboxymethylaminomethyl modification enzyme MnmG (629 aa).

FAD contacts are provided by residues Gly-13–Gly-18, Val-125, and Ser-180. Gly-273 to Phe-287 provides a ligand contact to NAD(+). FAD is bound at residue Gln-370.

This sequence belongs to the MnmG family. In terms of assembly, homodimer. Heterotetramer of two MnmE and two MnmG subunits. It depends on FAD as a cofactor.

Its subcellular location is the cytoplasm. Functionally, NAD-binding protein involved in the addition of a carboxymethylaminomethyl (cmnm) group at the wobble position (U34) of certain tRNAs, forming tRNA-cmnm(5)s(2)U34. The chain is tRNA uridine 5-carboxymethylaminomethyl modification enzyme MnmG from Salmonella schwarzengrund (strain CVM19633).